Here is a 149-residue protein sequence, read N- to C-terminus: 3-dehydroquinate dehydratase (149 aa).

The Proton acceptor role is filled by tyrosine 25. The substrate site is built by asparagine 76, histidine 82, and aspartate 89. Catalysis depends on histidine 102, which acts as the Proton donor. Residues 103–104 (LS) and arginine 113 contribute to the substrate site.

This sequence belongs to the type-II 3-dehydroquinase family. Homododecamer.

The catalysed reaction is 3-dehydroquinate = 3-dehydroshikimate + H2O. The protein operates within metabolic intermediate biosynthesis; chorismate biosynthesis; chorismate from D-erythrose 4-phosphate and phosphoenolpyruvate: step 3/7. Catalyzes a trans-dehydration via an enolate intermediate. The polypeptide is 3-dehydroquinate dehydratase (Acaryochloris marina (strain MBIC 11017)).